The primary structure comprises 821 residues: Leucine--tRNA ligase (821 aa).

The 'HIGH' region motif lies at proline 44–histidine 54. The 'KMSKS' region motif lies at lysine 589–serine 593. Position 592 (lysine 592) interacts with ATP.

Belongs to the class-I aminoacyl-tRNA synthetase family.

It localises to the cytoplasm. The enzyme catalyses tRNA(Leu) + L-leucine + ATP = L-leucyl-tRNA(Leu) + AMP + diphosphate. This Campylobacter curvus (strain 525.92) protein is Leucine--tRNA ligase.